Reading from the N-terminus, the 251-residue chain is Adenylate kinase (251 aa).

Position 46–51 (46–51 (GAGKGT)) interacts with ATP. The NMP stretch occupies residues 66-95 (ATGDMLRSQVQQQTPLGVEAKKIMDAGGLV). Residues threonine 67, arginine 72, 93-95 (GLV), 122-125 (GFPR), and glutamine 129 contribute to the AMP site. The segment at 163–200 (GRLVHPASGRSYHKVFNPPKKEMIDDITGEALVQRSDD) is LID. Residues arginine 164 and 173-174 (SY) contribute to the ATP site. AMP is bound by residues arginine 197 and arginine 208. Glutamine 236 is an ATP binding site.

This sequence belongs to the adenylate kinase family. AK2 subfamily. Monomer.

The protein localises to the cytoplasm. The protein resides in the cytosol. It is found in the mitochondrion intermembrane space. It catalyses the reaction AMP + ATP = 2 ADP. Its function is as follows. Catalyzes the reversible transfer of the terminal phosphate group between ATP and AMP. Plays an important role in cellular energy homeostasis and in adenine nucleotide metabolism. Adenylate kinase activity is critical for regulation of the phosphate utilization and the AMP de novo biosynthesis pathways. This is Adenylate kinase from Yarrowia lipolytica (strain CLIB 122 / E 150) (Yeast).